The sequence spans 337 residues: Large ribosomal subunit protein uL3 (337 aa).

The disordered stretch occupies residues 1 to 20 (MASIHRPKRGSLAFSPRKRA).

Belongs to the universal ribosomal protein uL3 family. In terms of assembly, part of the 50S ribosomal subunit. Forms a cluster with proteins L14 and L24e.

One of the primary rRNA binding proteins, it binds directly near the 3'-end of the 23S rRNA, where it nucleates assembly of the 50S subunit. The chain is Large ribosomal subunit protein uL3 from Methanosarcina mazei (strain ATCC BAA-159 / DSM 3647 / Goe1 / Go1 / JCM 11833 / OCM 88) (Methanosarcina frisia).